The sequence spans 378 residues: Bifunctional enzyme IspD/IspF (378 aa).

A 2-C-methyl-D-erythritol 4-phosphate cytidylyltransferase region spans residues 1 to 222 (MTETVAIIVA…RLLSPTGAPR (222 aa)). The tract at residues 222–378 (RIGKGYDVHE…EAVALLMPKG (157 aa)) is 2-C-methyl-D-erythritol 2,4-cyclodiphosphate synthase. Residues D228 and H230 each contribute to the a divalent metal cation site. Residues 228–230 (DVH) and 254–255 (HS) each bind 4-CDP-2-C-methyl-D-erythritol 2-phosphate. Position 262 (H262) interacts with a divalent metal cation. Residues 276–278 (DIG), 352–355 (TTTE), F359, and R362 contribute to the 4-CDP-2-C-methyl-D-erythritol 2-phosphate site.

This sequence in the N-terminal section; belongs to the IspD/TarI cytidylyltransferase family. IspD subfamily. It in the C-terminal section; belongs to the IspF family. Requires a divalent metal cation as cofactor.

The catalysed reaction is 2-C-methyl-D-erythritol 4-phosphate + CTP + H(+) = 4-CDP-2-C-methyl-D-erythritol + diphosphate. It carries out the reaction 4-CDP-2-C-methyl-D-erythritol 2-phosphate = 2-C-methyl-D-erythritol 2,4-cyclic diphosphate + CMP. The protein operates within isoprenoid biosynthesis; isopentenyl diphosphate biosynthesis via DXP pathway; isopentenyl diphosphate from 1-deoxy-D-xylulose 5-phosphate: step 2/6. Its pathway is isoprenoid biosynthesis; isopentenyl diphosphate biosynthesis via DXP pathway; isopentenyl diphosphate from 1-deoxy-D-xylulose 5-phosphate: step 4/6. Its function is as follows. Bifunctional enzyme that catalyzes the formation of 4-diphosphocytidyl-2-C-methyl-D-erythritol from CTP and 2-C-methyl-D-erythritol 4-phosphate (MEP) (IspD), and catalyzes the conversion of 4-diphosphocytidyl-2-C-methyl-D-erythritol 2-phosphate (CDP-ME2P) to 2-C-methyl-D-erythritol 2,4-cyclodiphosphate (ME-CPP) with a corresponding release of cytidine 5-monophosphate (CMP) (IspF). This Hyphomonas neptunium (strain ATCC 15444) protein is Bifunctional enzyme IspD/IspF.